We begin with the raw amino-acid sequence, 302 residues long: Recombination-associated protein RdgC (302 aa).

Belongs to the RdgC family.

Its subcellular location is the cytoplasm. The protein localises to the nucleoid. Its function is as follows. May be involved in recombination. This chain is Recombination-associated protein RdgC, found in Xanthomonas campestris pv. campestris (strain 8004).